The primary structure comprises 340 residues: Phosphate acyltransferase (340 aa).

The protein belongs to the PlsX family. Homodimer. Probably interacts with PlsY.

The protein localises to the cytoplasm. It catalyses the reaction a fatty acyl-[ACP] + phosphate = an acyl phosphate + holo-[ACP]. It participates in lipid metabolism; phospholipid metabolism. Functionally, catalyzes the reversible formation of acyl-phosphate (acyl-PO(4)) from acyl-[acyl-carrier-protein] (acyl-ACP). This enzyme utilizes acyl-ACP as fatty acyl donor, but not acyl-CoA. The chain is Phosphate acyltransferase from Nostoc punctiforme (strain ATCC 29133 / PCC 73102).